The primary structure comprises 451 residues: Rab GDP-dissociation inhibitor (451 aa).

2 interaction with YPT1 regions span residues 106 to 112 (RYVDFKQ) and 234 to 259 (YPMYGLGELPQGFARLSAIYGGTYML).

It belongs to the Rab GDI family. As to quaternary structure, interacts with the GDP-bound form of Rab GTPase YPT1. Interacts with YPT10.

It is found in the cytoplasm. Regulates the GDP/GTP exchange reaction of SEC4 by inhibiting the dissociation of GDP from it, and the subsequent binding of GTP to SEC4. Plays an essential role in the yeast secretory pathway. Extracts GDP-bound YPT7 from vacuolar membranes, antagonizing vacuolar membrane fusion. The polypeptide is Rab GDP-dissociation inhibitor (GDI1) (Saccharomyces cerevisiae (strain ATCC 204508 / S288c) (Baker's yeast)).